Reading from the N-terminus, the 82-residue chain is Small ribosomal subunit protein bS16 (82 aa).

Belongs to the bacterial ribosomal protein bS16 family.

The polypeptide is Small ribosomal subunit protein bS16 (Desulfosudis oleivorans (strain DSM 6200 / JCM 39069 / Hxd3) (Desulfococcus oleovorans)).